A 446-amino-acid polypeptide reads, in one-letter code: Chromosomal replication initiator protein DnaA (446 aa).

Residues 1-81 (MENISDLWNS…AKLAIRFIIP (81 aa)) form a domain I, interacts with DnaA modulators region. The interval 81-109 (PQSQAEEDIDLPPVKPNPAQDDSAHLPQS) is domain II. The tract at residues 110–326 (MLNPKYTFDT…GALIRVVAYS (217 aa)) is domain III, AAA+ region. The ATP site is built by Gly-154, Gly-156, Lys-157, and Thr-158. Residues 327–446 (SLINKDINAD…QVEEINGILK (120 aa)) are domain IV, binds dsDNA.

The protein belongs to the DnaA family. In terms of assembly, oligomerizes as a right-handed, spiral filament on DNA at oriC.

Its subcellular location is the cytoplasm. Plays an essential role in the initiation and regulation of chromosomal replication. ATP-DnaA binds to the origin of replication (oriC) to initiate formation of the DNA replication initiation complex once per cell cycle. Binds the DnaA box (a 9 base pair repeat at the origin) and separates the double-stranded (ds)DNA. Forms a right-handed helical filament on oriC DNA; dsDNA binds to the exterior of the filament while single-stranded (ss)DNA is stabiized in the filament's interior. The ATP-DnaA-oriC complex binds and stabilizes one strand of the AT-rich DNA unwinding element (DUE), permitting loading of DNA polymerase. After initiation quickly degrades to an ADP-DnaA complex that is not apt for DNA replication. Binds acidic phospholipids. This is Chromosomal replication initiator protein DnaA from Bacillus cereus (strain B4264).